Consider the following 196-residue polypeptide: Riboflavin transporter RibU (196 aa).

The next 5 helical transmembrane spans lie at 14 to 34 (LIAI…VPII), 46 to 66 (IVPV…WVIL), 80 to 100 (VNTY…ITVL), 120 to 140 (LISS…FVAI), and 164 to 184 (MVLP…MIIL).

It belongs to the prokaryotic riboflavin transporter (P-RFT) (TC 2.A.87) family. In terms of assembly, in E.coli forms a stable energy-coupling factor (ECF) transporter complex probably composed of a membrane-embedded substrate-binding protein (S component), 2 ATP-binding proteins (A components) and 2 transmembrane proteins (T component). May be able to interact with more than 1 S component at a time.

It localises to the cell membrane. In terms of biological role, probable riboflavin-binding protein that interacts with the energy-coupling factor (ECF) ABC-transporter complex. Unlike classic ABC transporters this ECF transporter provides the energy necessary to transport a number of different substrates. The substrates themselves are bound by transmembrane, not extracytoplasmic soluble proteins and transport it into cells. This chain is Riboflavin transporter RibU (ribU), found in Leuconostoc mesenteroides subsp. mesenteroides (strain ATCC 8293 / DSM 20343 / BCRC 11652 / CCM 1803 / JCM 6124 / NCDO 523 / NBRC 100496 / NCIMB 8023 / NCTC 12954 / NRRL B-1118 / 37Y).